A 943-amino-acid polypeptide reads, in one-letter code: Isoleucine--tRNA ligase (943 aa).

Residues 58–68 (PYANGNIHIGH) carry the 'HIGH' region motif. E567 contributes to the L-isoleucyl-5'-AMP binding site. A 'KMSKS' region motif is present at residues 608–612 (KMSKS). K611 is a binding site for ATP. 4 residues coordinate Zn(2+): C906, C909, C926, and C929.

The protein belongs to the class-I aminoacyl-tRNA synthetase family. IleS type 1 subfamily. In terms of assembly, monomer. Zn(2+) is required as a cofactor.

It is found in the cytoplasm. The enzyme catalyses tRNA(Ile) + L-isoleucine + ATP = L-isoleucyl-tRNA(Ile) + AMP + diphosphate. In terms of biological role, catalyzes the attachment of isoleucine to tRNA(Ile). As IleRS can inadvertently accommodate and process structurally similar amino acids such as valine, to avoid such errors it has two additional distinct tRNA(Ile)-dependent editing activities. One activity is designated as 'pretransfer' editing and involves the hydrolysis of activated Val-AMP. The other activity is designated 'posttransfer' editing and involves deacylation of mischarged Val-tRNA(Ile). This is Isoleucine--tRNA ligase from Stutzerimonas stutzeri (strain A1501) (Pseudomonas stutzeri).